We begin with the raw amino-acid sequence, 190 residues long: Xanthine phosphoribosyltransferase (190 aa).

Residues leucine 20 and asparagine 27 each contribute to the xanthine site. 128–132 (ANGHA) is a 5-phospho-alpha-D-ribose 1-diphosphate binding site. Lysine 156 contributes to the xanthine binding site.

Belongs to the purine/pyrimidine phosphoribosyltransferase family. Xpt subfamily. In terms of assembly, homodimer.

The protein localises to the cytoplasm. It carries out the reaction XMP + diphosphate = xanthine + 5-phospho-alpha-D-ribose 1-diphosphate. It functions in the pathway purine metabolism; XMP biosynthesis via salvage pathway; XMP from xanthine: step 1/1. Functionally, converts the preformed base xanthine, a product of nucleic acid breakdown, to xanthosine 5'-monophosphate (XMP), so it can be reused for RNA or DNA synthesis. This is Xanthine phosphoribosyltransferase from Pseudomonas aeruginosa (strain LESB58).